The chain runs to 516 residues: uncharacterized protein (516 aa).

PFTB repeat units lie at residues 45-86 (RQDA…QRAD) and 401-443 (DERA…DGSE).

This is an uncharacterized protein from Bradyrhizobium diazoefficiens (strain JCM 10833 / BCRC 13528 / IAM 13628 / NBRC 14792 / USDA 110).